We begin with the raw amino-acid sequence, 312 residues long: tRNA dimethylallyltransferase (312 aa).

13-20 lines the ATP pocket; that stretch reads GPTAVGKT. 15 to 20 provides a ligand contact to substrate; sequence TAVGKT. Interaction with substrate tRNA regions lie at residues 38 to 41 and 163 to 167; these read DSVQ and QRVVR.

This sequence belongs to the IPP transferase family. Monomer. Mg(2+) serves as cofactor.

The enzyme catalyses adenosine(37) in tRNA + dimethylallyl diphosphate = N(6)-dimethylallyladenosine(37) in tRNA + diphosphate. Functionally, catalyzes the transfer of a dimethylallyl group onto the adenine at position 37 in tRNAs that read codons beginning with uridine, leading to the formation of N6-(dimethylallyl)adenosine (i(6)A). The protein is tRNA dimethylallyltransferase of Exiguobacterium sibiricum (strain DSM 17290 / CCUG 55495 / CIP 109462 / JCM 13490 / 255-15).